Here is a 154-residue protein sequence, read N- to C-terminus: MNKKITLNIQIASKKIIFLPKKCQYLIWIRSSLMHVYQSNIKVLIRIVEKSEIKSLNYKFRQKNKATNILSFSYINDKMIDKNYIGDLIICSEIVTEEAKKKNVTLESHWAHITIHGILHLLGYNHDNLNNRIKMEYLETKIMASLNYKNPYIY.

Residues histidine 116, histidine 120, and histidine 126 each contribute to the Zn(2+) site.

This sequence belongs to the endoribonuclease YbeY family. The cofactor is Zn(2+).

Its subcellular location is the cytoplasm. Its function is as follows. Single strand-specific metallo-endoribonuclease involved in late-stage 70S ribosome quality control and in maturation of the 3' terminus of the 16S rRNA. The chain is Endoribonuclease YbeY from Buchnera aphidicola subsp. Baizongia pistaciae (strain Bp).